Here is a 399-residue protein sequence, read N- to C-terminus: Glutathione-independent formaldehyde dehydrogenase (399 aa).

Cys47 contributes to the Zn(2+) binding site. Residues Gly48, Ser49, and His52 each contribute to the NAD(+) site. Zn(2+)-binding residues include His68, Cys98, Cys101, Cys104, Cys112, and Asp170. NAD(+) is bound by residues Val198, Asp218, Arg223, Val263, Arg268, Pro300, Gln338, and Thr339.

This sequence belongs to the zinc-containing alcohol dehydrogenase family. In terms of assembly, homotetramer. The cofactor is Zn(2+).

The catalysed reaction is formaldehyde + NAD(+) + H2O = formate + NADH + 2 H(+). The enzyme catalyses acetaldehyde + NAD(+) + H2O = acetate + NADH + 2 H(+). Its function is as follows. Dehydrogenase that catalyzes the NAD(+)-dependent oxidation of formaldehyde and acetaldehyde. Shows no detectable activity against either aldehydes with longer carbon chains or ethanol. The chain is Glutathione-independent formaldehyde dehydrogenase from Pseudomonas aeruginosa (strain LESB58).